A 179-amino-acid polypeptide reads, in one-letter code: Large ribosomal subunit protein uL10 (179 aa).

This sequence belongs to the universal ribosomal protein uL10 family. In terms of assembly, part of the ribosomal stalk of the 50S ribosomal subunit. The N-terminus interacts with L11 and the large rRNA to form the base of the stalk. The C-terminus forms an elongated spine to which L12 dimers bind in a sequential fashion forming a multimeric L10(L12)X complex.

Its function is as follows. Forms part of the ribosomal stalk, playing a central role in the interaction of the ribosome with GTP-bound translation factors. This Polynucleobacter necessarius subsp. necessarius (strain STIR1) protein is Large ribosomal subunit protein uL10.